Here is a 260-residue protein sequence, read N- to C-terminus: Hydroxyethylthiazole kinase (260 aa).

Residue Met-36 coordinates substrate. 2 residues coordinate ATP: Arg-112 and Thr-157. Gly-184 lines the substrate pocket.

This sequence belongs to the Thz kinase family. Mg(2+) is required as a cofactor.

The catalysed reaction is 5-(2-hydroxyethyl)-4-methylthiazole + ATP = 4-methyl-5-(2-phosphooxyethyl)-thiazole + ADP + H(+). Its pathway is cofactor biosynthesis; thiamine diphosphate biosynthesis; 4-methyl-5-(2-phosphoethyl)-thiazole from 5-(2-hydroxyethyl)-4-methylthiazole: step 1/1. In terms of biological role, catalyzes the phosphorylation of the hydroxyl group of 4-methyl-5-beta-hydroxyethylthiazole (THZ). This chain is Hydroxyethylthiazole kinase, found in Shouchella clausii (strain KSM-K16) (Alkalihalobacillus clausii).